The chain runs to 148 residues: Hemoglobin subunit gamma (148 aa).

Residues 3–148 (HFTAEEKAII…VAIAMGHKYH (146 aa)) form the Globin domain. Heme b contacts are provided by His64 and His93.

It belongs to the globin family. In terms of assembly, heterotetramer of two alpha chains and two gamma chains in fetal hemoglobin (Hb F). Red blood cells.

In terms of biological role, gamma chains make up the fetal hemoglobin F, in combination with alpha chains. This is Hemoglobin subunit gamma (HBG) from Carlito syrichta (Philippine tarsier).